A 309-amino-acid chain; its full sequence is MTLTNQMDFQNHFLAKDLHRITKPKKVGKRRHTDESNDEDASKPRFMPKTLSKLAQHKKQRQPQVMGQKLSVSRIIETLDQESLQNLISNLVSEHPEVAPTLLKISPQVTIEDSLMVLEQKLERILQNMPYRVDASSDYSFLRVKPHVEDFFQTLSDYTLNFLPPIESDLTVPLMFLMKFLAKCFPRLPKFHAVEYRYYHSLTVDKFNTILDDILVQFLSEKKHNIILAINQDWLTDFRKISELNDNNFSSVYERLKQEIDQYENPDAASGQPSTNNAGRLTGLANLLNFSSDNSPLHGNTVGNVFDTI.

The tract at residues 20–45 is disordered; that stretch reads RITKPKKVGKRRHTDESNDEDASKPR. The span at 21–31 shows a compositional bias: basic residues; the sequence is ITKPKKVGKRR. Residues 32–43 show a composition bias toward basic and acidic residues; the sequence is HTDESNDEDASK.

This sequence belongs to the cut8/STS1 family. As to quaternary structure, binds the proteasome.

Its subcellular location is the cytoplasm. The protein resides in the nucleus. Its function is as follows. Involved in ubiquitin-mediated protein degradation. Regulatory factor in the ubiquitin/proteasome pathway that controls the turnover of proteasome substrates. Targets proteasomes to the nucleus and facilitates the degradation of nuclear proteins. This Ogataea parapolymorpha (strain ATCC 26012 / BCRC 20466 / JCM 22074 / NRRL Y-7560 / DL-1) (Yeast) protein is Tethering factor for nuclear proteasome STS1 (STS1).